The chain runs to 156 residues: SsrA-binding protein (156 aa).

Belongs to the SmpB family.

Its subcellular location is the cytoplasm. Required for rescue of stalled ribosomes mediated by trans-translation. Binds to transfer-messenger RNA (tmRNA), required for stable association of tmRNA with ribosomes. tmRNA and SmpB together mimic tRNA shape, replacing the anticodon stem-loop with SmpB. tmRNA is encoded by the ssrA gene; the 2 termini fold to resemble tRNA(Ala) and it encodes a 'tag peptide', a short internal open reading frame. During trans-translation Ala-aminoacylated tmRNA acts like a tRNA, entering the A-site of stalled ribosomes, displacing the stalled mRNA. The ribosome then switches to translate the ORF on the tmRNA; the nascent peptide is terminated with the 'tag peptide' encoded by the tmRNA and targeted for degradation. The ribosome is freed to recommence translation, which seems to be the essential function of trans-translation. This Clostridium tetani (strain Massachusetts / E88) protein is SsrA-binding protein.